A 723-amino-acid chain; its full sequence is Nucleolar protein 11 (723 aa).

N6-methyllysine is present on Lys-346. The segment at 549–572 is disordered; that stretch reads FGPEDGNCSEDSQQLNDKPADTAH.

Interacts with UTP4. Interacts with FBL/fibrillarin in a transcription-dependent manner. May associate with the proposed t-UTP subcomplex of the SSU processome containing at least UTP4, WDR43, HEATR1, UTP15, WDR75.

It is found in the nucleus. The protein localises to the nucleolus. Its function is as follows. Ribosome biogenesis factor. May be required for both optimal rDNA transcription and small subunit (SSU) pre-rRNA processing at sites A', A0, 1 and 2b. The protein is Nucleolar protein 11 (Nol11) of Mus musculus (Mouse).